The sequence spans 158 residues: Ribosomal RNA large subunit methyltransferase H (158 aa).

S-adenosyl-L-methionine-binding positions include L74, G105, and 124–129; that span reads LGPLTL.

This sequence belongs to the RNA methyltransferase RlmH family. In terms of assembly, homodimer.

Its subcellular location is the cytoplasm. The catalysed reaction is pseudouridine(1915) in 23S rRNA + S-adenosyl-L-methionine = N(3)-methylpseudouridine(1915) in 23S rRNA + S-adenosyl-L-homocysteine + H(+). In terms of biological role, specifically methylates the pseudouridine at position 1915 (m3Psi1915) in 23S rRNA. In Xylella fastidiosa (strain Temecula1 / ATCC 700964), this protein is Ribosomal RNA large subunit methyltransferase H.